The sequence spans 418 residues: Tryptophan synthase beta chain 1 (418 aa).

Position 99 is an N6-(pyridoxal phosphate)lysine (Lys-99).

Belongs to the TrpB family. As to quaternary structure, tetramer of two alpha and two beta chains. It depends on pyridoxal 5'-phosphate as a cofactor.

It carries out the reaction (1S,2R)-1-C-(indol-3-yl)glycerol 3-phosphate + L-serine = D-glyceraldehyde 3-phosphate + L-tryptophan + H2O. The protein operates within amino-acid biosynthesis; L-tryptophan biosynthesis; L-tryptophan from chorismate: step 5/5. Functionally, the beta subunit is responsible for the synthesis of L-tryptophan from indole and L-serine. This chain is Tryptophan synthase beta chain 1 (trpB1), found in Corynebacterium efficiens (strain DSM 44549 / YS-314 / AJ 12310 / JCM 11189 / NBRC 100395).